The primary structure comprises 60 residues: Large ribosomal subunit protein uL30 (60 aa).

The protein belongs to the universal ribosomal protein uL30 family. As to quaternary structure, part of the 50S ribosomal subunit.

This Ligilactobacillus salivarius (strain UCC118) (Lactobacillus salivarius) protein is Large ribosomal subunit protein uL30.